Reading from the N-terminus, the 548-residue chain is Probable sucrose-6-phosphate hydrolase (548 aa).

Residues 105–108, Gln124, 167–168, 228–229, and Glu283 each bind substrate; these read LLND, FS, and RD. The active site involves Asp108.

Belongs to the glycosyl hydrolase 32 family.

The protein resides in the cytoplasm. The enzyme catalyses Hydrolysis of terminal non-reducing beta-D-fructofuranoside residues in beta-D-fructofuranosides.. The protein operates within glycan biosynthesis; sucrose metabolism. Functionally, enables the bacterium to metabolize sucrose as a sole carbon source. This chain is Probable sucrose-6-phosphate hydrolase, found in Vibrio cholerae serotype O1 (strain ATCC 39315 / El Tor Inaba N16961).